The chain runs to 278 residues: Large ribosomal subunit protein uL2 (278 aa).

The disordered stretch occupies residues 218-278 (RPHNRGVVMN…IMRSRHQRKK (61 aa)).

This sequence belongs to the universal ribosomal protein uL2 family. Part of the 50S ribosomal subunit. Forms a bridge to the 30S subunit in the 70S ribosome.

Its function is as follows. One of the primary rRNA binding proteins. Required for association of the 30S and 50S subunits to form the 70S ribosome, for tRNA binding and peptide bond formation. It has been suggested to have peptidyltransferase activity; this is somewhat controversial. Makes several contacts with the 16S rRNA in the 70S ribosome. The sequence is that of Large ribosomal subunit protein uL2 from Rhizobium etli (strain ATCC 51251 / DSM 11541 / JCM 21823 / NBRC 15573 / CFN 42).